The chain runs to 362 residues: Serine/threonine-protein kinase-like protein At3g51990 (362 aa).

The N-terminal stretch at 1-24 is a signal peptide; that stretch reads MGYLSCKAGSAVAIAVSSAASTSG. A compositionally biased stretch (low complexity) spans 21 to 32; that stretch reads STSGSTSSKASA. Positions 21-43 are disordered; sequence STSGSTSSKASAPPESPIEDRPR. The Protein kinase domain maps to 59–329; it reads FDINNLLGRG…PGMEEVVGWL (271 aa). Residues 65–73 and K86 contribute to the ATP site; that span reads LGRGSHGSV. An N-linked (GlcNAc...) asparagine glycan is attached at N136. Residue D185 is the Proton acceptor of the active site. Position 219 is a phosphoserine (S219). Phosphothreonine occurs at positions 220 and 225. At Y233 the chain carries Phosphotyrosine.

The protein belongs to the protein kinase superfamily. Ser/Thr protein kinase family.

It is found in the secreted. The enzyme catalyses L-seryl-[protein] + ATP = O-phospho-L-seryl-[protein] + ADP + H(+). It carries out the reaction L-threonyl-[protein] + ATP = O-phospho-L-threonyl-[protein] + ADP + H(+). The sequence is that of Serine/threonine-protein kinase-like protein At3g51990 from Arabidopsis thaliana (Mouse-ear cress).